The following is a 211-amino-acid chain: Probable metallo-hydrolase YqgX (211 aa).

Zn(2+) contacts are provided by His54, His56, Asp58, His59, His130, Asp149, and His190.

The protein belongs to the metallo-beta-lactamase superfamily. Glyoxalase II family. It depends on Zn(2+) as a cofactor.

In Bacillus subtilis (strain 168), this protein is Probable metallo-hydrolase YqgX (yqgX).